The primary structure comprises 195 residues: Ras-related protein rac-2 (195 aa).

Glycine 10–threonine 17 serves as a coordination point for GTP. An Effector region motif is present at residues tyrosine 32 to tyrosine 40. Residues aspartate 57–glutamine 61 and threonine 115–aspartate 118 contribute to the GTP site. The interval glycine 176–leucine 195 is disordered. Cysteine 192 is subject to Cysteine methyl ester. The S-geranylgeranyl cysteine moiety is linked to residue cysteine 192. A propeptide spans threonine 193–leucine 195 (removed in mature form).

It belongs to the small GTPase superfamily. Rho family.

The protein localises to the cell membrane. Its function is as follows. During gonad morphogenesis, plays a role in distal tip cell (DTC)-mediated guidance of gonad elongation. The chain is Ras-related protein rac-2 (rac-2) from Caenorhabditis elegans.